Here is a 456-residue protein sequence, read N- to C-terminus: Antigen Lp49 (456 aa).

The signal sequence occupies residues 1-34; sequence MNSNPKKKFLKLIKIKSDIILLIPIFLFLVCCKS. Cysteines 346 and 347 form a disulfide.

The protein localises to the cell outer membrane. May be involved in virulence. Binds human plasminogen (PLG) and stimulates its proteolytic cleavage to enzymatically active plasmin in the presence of an urokinase-type PLG activator in vitro. Activated plasmin has proteolytic activity which may help the bacteria to spread throughout the host by degrading extracellular matrix components, facilitating tissue penetration and invasion. This is Antigen Lp49 from Leptospira interrogans serogroup Icterohaemorrhagiae serovar copenhageni (strain Fiocruz L1-130).